The primary structure comprises 879 residues: Alanine--tRNA ligase (879 aa).

Residues H566, H570, C668, and H672 each contribute to the Zn(2+) site.

This sequence belongs to the class-II aminoacyl-tRNA synthetase family. Zn(2+) is required as a cofactor.

It localises to the cytoplasm. The catalysed reaction is tRNA(Ala) + L-alanine + ATP = L-alanyl-tRNA(Ala) + AMP + diphosphate. In terms of biological role, catalyzes the attachment of alanine to tRNA(Ala) in a two-step reaction: alanine is first activated by ATP to form Ala-AMP and then transferred to the acceptor end of tRNA(Ala). Also edits incorrectly charged Ser-tRNA(Ala) and Gly-tRNA(Ala) via its editing domain. This Listeria innocua serovar 6a (strain ATCC BAA-680 / CLIP 11262) protein is Alanine--tRNA ligase.